An 86-amino-acid chain; its full sequence is Small ribosomal subunit protein bS20 (86 aa).

This sequence belongs to the bacterial ribosomal protein bS20 family.

Functionally, binds directly to 16S ribosomal RNA. This is Small ribosomal subunit protein bS20 from Arthrobacter sp. (strain FB24).